The chain runs to 332 residues: Phospho-N-acetylmuramoyl-pentapeptide-transferase (332 aa).

8 consecutive transmembrane segments (helical) span residues 9 to 29 (IYTIIIGFFITLILGPLIIPF), 55 to 75 (TIGGLIIIASVLVTSFTAGLI), 79 to 99 (LWVAIGAMVAFGLIGFIDDFI), 115 to 135 (MSLQIIVAVFLAIYQSNISVM), 155 to 175 (IPQYLDLGILYIPFIVFVVVA), 196 to 216 (IVAAFFSILAMEWGYPSLAIF), 253 to 273 (AVAILMNVALIVPIVGGIYFA), and 312 to 332 (VVIVFWIVTVILCLIGMLGLN).

This sequence belongs to the glycosyltransferase 4 family. MraY subfamily. Requires Mg(2+) as cofactor.

The protein resides in the cell membrane. It catalyses the reaction UDP-N-acetyl-alpha-D-muramoyl-L-alanyl-gamma-D-glutamyl-meso-2,6-diaminopimeloyl-D-alanyl-D-alanine + di-trans,octa-cis-undecaprenyl phosphate = di-trans,octa-cis-undecaprenyl diphospho-N-acetyl-alpha-D-muramoyl-L-alanyl-D-glutamyl-meso-2,6-diaminopimeloyl-D-alanyl-D-alanine + UMP. It participates in cell wall biogenesis; peptidoglycan biosynthesis. Functionally, catalyzes the initial step of the lipid cycle reactions in the biosynthesis of the cell wall peptidoglycan: transfers peptidoglycan precursor phospho-MurNAc-pentapeptide from UDP-MurNAc-pentapeptide onto the lipid carrier undecaprenyl phosphate, yielding undecaprenyl-pyrophosphoryl-MurNAc-pentapeptide, known as lipid I. The polypeptide is Phospho-N-acetylmuramoyl-pentapeptide-transferase (Alkaliphilus oremlandii (strain OhILAs) (Clostridium oremlandii (strain OhILAs))).